The primary structure comprises 514 residues: UDP-N-acetylmuramyl-tripeptide synthetase (514 aa).

2 residues coordinate UDP-N-acetyl-alpha-D-muramoyl-L-alanyl-D-glutamate: leucine 44 and serine 46. 129–135 (GTNGKTS) provides a ligand contact to ATP. Residues 171-172 (TT), serine 198, and arginine 206 contribute to the UDP-N-acetyl-alpha-D-muramoyl-L-alanyl-D-glutamate site. Lysine 238 is modified (N6-carboxylysine).

It belongs to the MurCDEF family. MurE subfamily. In terms of processing, carboxylation is probably crucial for Mg(2+) binding and, consequently, for the gamma-phosphate positioning of ATP.

It is found in the cytoplasm. It functions in the pathway cell wall biogenesis; peptidoglycan biosynthesis. Functionally, catalyzes the addition of an amino acid to the nucleotide precursor UDP-N-acetylmuramoyl-L-alanyl-D-glutamate (UMAG) in the biosynthesis of bacterial cell-wall peptidoglycan. The protein is UDP-N-acetylmuramyl-tripeptide synthetase of Leifsonia xyli subsp. xyli (strain CTCB07).